A 393-amino-acid chain; its full sequence is Protein FAM53C (393 aa).

Position 1 is an N-acetylmethionine (Met1). A disordered region spans residues 77-120; the sequence is HLRPPSRGNSPKEPPLSQVLSPEPPDPEKLPVPPAPPSKRHCRS. Ser122 and Ser162 each carry phosphoserine. 2 disordered regions span residues 141–167 and 204–283; these read LWTPIKHRGNAGGGGPQVPQQSPPKRV and QPCA…ARKT. Over residues 204 to 215 the composition is skewed to polar residues; the sequence is QPCATSPQSGSW. A phosphoserine mark is found at Ser232, Ser234, Ser255, Ser273, and Ser299. A compositionally biased stretch (low complexity) spans 241 to 256; it reads ASRFLPSARSSPASSP. Over residues 343 to 355 the composition is skewed to low complexity; the sequence is SCSPVEGSSQVLS. Positions 343-365 are disordered; sequence SCSPVEGSSQVLSESEEEEEGSV.

This sequence belongs to the FAM53 family.

The polypeptide is Protein FAM53C (Mus musculus (Mouse)).